A 469-amino-acid polypeptide reads, in one-letter code: Aspartyl/glutamyl-tRNA(Asn/Gln) amidotransferase subunit B (469 aa).

Belongs to the GatB/GatE family. GatB subfamily. Heterotrimer of A, B and C subunits.

It catalyses the reaction L-glutamyl-tRNA(Gln) + L-glutamine + ATP + H2O = L-glutaminyl-tRNA(Gln) + L-glutamate + ADP + phosphate + H(+). The catalysed reaction is L-aspartyl-tRNA(Asn) + L-glutamine + ATP + H2O = L-asparaginyl-tRNA(Asn) + L-glutamate + ADP + phosphate + 2 H(+). Its function is as follows. Allows the formation of correctly charged Asn-tRNA(Asn) or Gln-tRNA(Gln) through the transamidation of misacylated Asp-tRNA(Asn) or Glu-tRNA(Gln) in organisms which lack either or both of asparaginyl-tRNA or glutaminyl-tRNA synthetases. The reaction takes place in the presence of glutamine and ATP through an activated phospho-Asp-tRNA(Asn) or phospho-Glu-tRNA(Gln). This chain is Aspartyl/glutamyl-tRNA(Asn/Gln) amidotransferase subunit B, found in Methanococcus maripaludis (strain C5 / ATCC BAA-1333).